A 1055-amino-acid polypeptide reads, in one-letter code: Endo-1,4-beta-xylanase A (1055 aa).

A signal peptide spans 1 to 29; that stretch reads MRKKRRGFLNASTAVLVGILAGFLGVVLA. Residues 30-357 are a; that stretch reads ATGALGFAVR…TTSAEIKLEM (328 aa). The GH10 domain maps to 360-688; it reads EEEIPALKDV…KLAYWAIVAP (329 aa). Glutamate 498 serves as the catalytic Proton donor. Residue glutamate 604 is the Nucleophile of the active site. CBM-cenC domains are found at residues 720–851 and 895–1040; these read PIEI…TNSQ and KSVA…PTNN.

Belongs to the glycosyl hydrolase 10 (cellulase F) family.

The enzyme catalyses Endohydrolysis of (1-&gt;4)-beta-D-xylosidic linkages in xylans.. This chain is Endo-1,4-beta-xylanase A (xynA), found in Thermotoga neapolitana.